The sequence spans 376 residues: Actin-related protein T1 (376 aa).

Belongs to the actin family.

The protein resides in the cytoplasm. It is found in the cytoskeleton. Its subcellular location is the nucleus. It localises to the cytoplasmic vesicle. The protein localises to the secretory vesicle. The protein resides in the acrosome. Negatively regulates the Hedgehog (SHH) signaling. Binds to the promoter of the SHH signaling mediator, GLI1, and inhibits its expression. The protein is Actin-related protein T1 (Actrt1) of Mus musculus (Mouse).